Reading from the N-terminus, the 191-residue chain is Adenylate kinase (191 aa).

An ATP-binding site is contributed by 10–15; it reads GAGKGT. The interval 30–59 is NMP; sequence STGDIFRANVTEGTPLGVEAKRYMDAGEYV. Residues Thr-31, Arg-36, 57 to 59, 85 to 88, and Gln-92 each bind AMP; these read EYV and GYPR. Residues 126–136 form an LID region; it reads QRAQVEGRADD. Arg-127 serves as a coordination point for ATP. Arg-133 and Arg-144 together coordinate AMP. Gly-172 contacts ATP.

This sequence belongs to the adenylate kinase family. As to quaternary structure, monomer.

The protein localises to the cytoplasm. It carries out the reaction AMP + ATP = 2 ADP. The protein operates within purine metabolism; AMP biosynthesis via salvage pathway; AMP from ADP: step 1/1. Its function is as follows. Catalyzes the reversible transfer of the terminal phosphate group between ATP and AMP. Plays an important role in cellular energy homeostasis and in adenine nucleotide metabolism. The protein is Adenylate kinase of Nocardioides sp. (strain ATCC BAA-499 / JS614).